A 332-amino-acid chain; its full sequence is 2,3-diketo-L-gulonate reductase (332 aa).

The active-site Proton donor is the histidine 44. NAD(+)-binding positions include 168 to 174, 224 to 225, and 304 to 306; these read ITMVDMS, WK, and GHE.

Belongs to the LDH2/MDH2 oxidoreductase family. DlgD subfamily. Homodimer.

Its subcellular location is the cytoplasm. It catalyses the reaction 3-dehydro-L-gulonate + NAD(+) = 2,3-dioxo-L-gulonate + NADH + H(+). The enzyme catalyses 3-dehydro-L-gulonate + NADP(+) = 2,3-dioxo-L-gulonate + NADPH + H(+). In terms of biological role, catalyzes the reduction of 2,3-diketo-L-gulonate in the presence of NADH, to form 3-keto-L-gulonate. The chain is 2,3-diketo-L-gulonate reductase from Escherichia coli O6:K15:H31 (strain 536 / UPEC).